Consider the following 250-residue polypeptide: Triosephosphate isomerase (250 aa).

Residue 9 to 11 participates in substrate binding; the sequence is NWK. H94 acts as the Electrophile in catalysis. The active-site Proton acceptor is the E166. Residues G172, S212, and 233-234 contribute to the substrate site; that span reads GG.

Belongs to the triosephosphate isomerase family. As to quaternary structure, homodimer.

It localises to the cytoplasm. It carries out the reaction D-glyceraldehyde 3-phosphate = dihydroxyacetone phosphate. It participates in carbohydrate biosynthesis; gluconeogenesis. It functions in the pathway carbohydrate degradation; glycolysis; D-glyceraldehyde 3-phosphate from glycerone phosphate: step 1/1. Its function is as follows. Involved in the gluconeogenesis. Catalyzes stereospecifically the conversion of dihydroxyacetone phosphate (DHAP) to D-glyceraldehyde-3-phosphate (G3P). The polypeptide is Triosephosphate isomerase (Treponema denticola (strain ATCC 35405 / DSM 14222 / CIP 103919 / JCM 8153 / KCTC 15104)).